Consider the following 206-residue polypeptide: Isochorismatase family protein 1A (206 aa).

Belongs to the isochorismatase family.

This is Isochorismatase family protein 1A from Dictyostelium discoideum (Social amoeba).